We begin with the raw amino-acid sequence, 203 residues long: ATP phosphoribosyltransferase (203 aa).

The protein belongs to the ATP phosphoribosyltransferase family. Short subfamily. Heteromultimer composed of HisG and HisZ subunits.

The protein localises to the cytoplasm. It carries out the reaction 1-(5-phospho-beta-D-ribosyl)-ATP + diphosphate = 5-phospho-alpha-D-ribose 1-diphosphate + ATP. The protein operates within amino-acid biosynthesis; L-histidine biosynthesis; L-histidine from 5-phospho-alpha-D-ribose 1-diphosphate: step 1/9. Catalyzes the condensation of ATP and 5-phosphoribose 1-diphosphate to form N'-(5'-phosphoribosyl)-ATP (PR-ATP). Has a crucial role in the pathway because the rate of histidine biosynthesis seems to be controlled primarily by regulation of HisG enzymatic activity. This Campylobacter fetus subsp. fetus (strain 82-40) protein is ATP phosphoribosyltransferase.